Consider the following 218-residue polypeptide: Small ribosomal subunit protein uS3c (218 aa).

The region spanning 47–120 is the KH type-2 domain; the sequence is VRTHIKSSSN…KLHIAIEKVA (74 aa).

It belongs to the universal ribosomal protein uS3 family. Part of the 30S ribosomal subunit.

Its subcellular location is the plastid. It localises to the chloroplast. The chain is Small ribosomal subunit protein uS3c (rps3) from Picea abies (Norway spruce).